The chain runs to 158 residues: NAD(P)H-quinone oxidoreductase subunit J, chloroplastic (158 aa).

It belongs to the complex I 30 kDa subunit family. In terms of assembly, NDH is composed of at least 16 different subunits, 5 of which are encoded in the nucleus.

It is found in the plastid. The protein localises to the chloroplast thylakoid membrane. The catalysed reaction is a plastoquinone + NADH + (n+1) H(+)(in) = a plastoquinol + NAD(+) + n H(+)(out). It catalyses the reaction a plastoquinone + NADPH + (n+1) H(+)(in) = a plastoquinol + NADP(+) + n H(+)(out). In terms of biological role, NDH shuttles electrons from NAD(P)H:plastoquinone, via FMN and iron-sulfur (Fe-S) centers, to quinones in the photosynthetic chain and possibly in a chloroplast respiratory chain. The immediate electron acceptor for the enzyme in this species is believed to be plastoquinone. Couples the redox reaction to proton translocation, and thus conserves the redox energy in a proton gradient. The chain is NAD(P)H-quinone oxidoreductase subunit J, chloroplastic from Piper cenocladum (Ant piper).